The chain runs to 248 residues: MTEATRILLGVNIDHVATLRQARGTRYPDPVKAALDAEEAGADGITVHLREDRRHIQERDVRVLKEVLQTRMNFEMGVTEEMLAFAEEIRPAHSCLVPERREELTTEGGLDVAGQEQRIRDAVRRLAAVGSEVSLFIDPDPRQIEASARVGAPAIELHTGRYADAEDPEEQARELQRVREGVALGRSLGLIVNAGHGLHYHNVEPVAAIDGINELNIGHAIVAHALFVGFRQAVAEMKALMLAAATKR.

Asparagine 12 is a 3-amino-2-oxopropyl phosphate binding site. Position 14–15 (14–15 (DH)) interacts with 1-deoxy-D-xylulose 5-phosphate. Arginine 23 serves as a coordination point for 3-amino-2-oxopropyl phosphate. The Proton acceptor role is filled by histidine 48. Arginine 50 and histidine 55 together coordinate 1-deoxy-D-xylulose 5-phosphate. Catalysis depends on glutamate 75, which acts as the Proton acceptor. Threonine 105 lines the 1-deoxy-D-xylulose 5-phosphate pocket. The active-site Proton donor is histidine 196. Residues glycine 197 and 218–219 (GH) contribute to the 3-amino-2-oxopropyl phosphate site.

It belongs to the PNP synthase family. As to quaternary structure, homooctamer; tetramer of dimers.

The protein resides in the cytoplasm. It carries out the reaction 3-amino-2-oxopropyl phosphate + 1-deoxy-D-xylulose 5-phosphate = pyridoxine 5'-phosphate + phosphate + 2 H2O + H(+). The protein operates within cofactor biosynthesis; pyridoxine 5'-phosphate biosynthesis; pyridoxine 5'-phosphate from D-erythrose 4-phosphate: step 5/5. Functionally, catalyzes the complicated ring closure reaction between the two acyclic compounds 1-deoxy-D-xylulose-5-phosphate (DXP) and 3-amino-2-oxopropyl phosphate (1-amino-acetone-3-phosphate or AAP) to form pyridoxine 5'-phosphate (PNP) and inorganic phosphate. This chain is Pyridoxine 5'-phosphate synthase, found in Pseudomonas aeruginosa (strain UCBPP-PA14).